The following is a 457-amino-acid chain: Acetate--CoA ligase [ADP-forming] II subunit alpha (457 aa).

Belongs to the acetate CoA ligase alpha subunit family. As to quaternary structure, heterotetramer of two alpha and two beta subunits.

It catalyses the reaction acetate + ATP + CoA = acetyl-CoA + ADP + phosphate. Functionally, catalyzes the reversible formation of acetate and ATP from acetyl-CoA by using ADP and phosphate. Can use other substrates such as phenylacetyl-CoA, indoleacetyl-CoA and isobutyryl-CoA, but not succinyl-CoA. Seems to be involved primarily in the degradation of aryl-CoA esters to the corresponding acids. Participates in the conversion of acetyl-CoA to acetate and in the degradation of branched-chain amino acids via branched-chain-acyl-CoA esters. This Pyrococcus furiosus (strain ATCC 43587 / DSM 3638 / JCM 8422 / Vc1) protein is Acetate--CoA ligase [ADP-forming] II subunit alpha.